A 252-amino-acid chain; its full sequence is AA9 family lytic polysaccharide monooxygenase B (252 aa).

The signal sequence occupies residues 1-20 (MVSFTKTFFAIVACALGVQA). Histidine 21 and histidine 106 together coordinate Cu(2+). A disulfide bridge connects residues cysteine 72 and cysteine 198. An N-linked (GlcNAc...) asparagine glycan is attached at asparagine 158. The O2 site is built by histidine 184 and glutamine 193. Tyrosine 195 is a Cu(2+) binding site. A glycan (N-linked (GlcNAc...) asparagine) is linked at asparagine 237.

Belongs to the polysaccharide monooxygenase AA9 family. The cofactor is Cu(2+).

The protein localises to the secreted. The catalysed reaction is [(1-&gt;4)-beta-D-glucosyl]n+m + reduced acceptor + O2 = 4-dehydro-beta-D-glucosyl-[(1-&gt;4)-beta-D-glucosyl]n-1 + [(1-&gt;4)-beta-D-glucosyl]m + acceptor + H2O.. In terms of biological role, lytic polysaccharide monooxygenase (LPMO) that depolymerizes crystalline and amorphous polysaccharides via the oxidation of scissile alpha- or beta-(1-4)-glycosidic bonds, yielding C1 or C4 oxidation products. Catalysis by LPMOs requires the reduction of the active-site copper from Cu(II) to Cu(I) by a reducing agent and H(2)O(2) or O(2) as a cosubstrate. The synergistic activity of LPMO9B with xylanase Xyl10G or cellulase Cel5B shows efficient bioconversion rates of 56 and 174 percent in pretreated kenaf (Hibiscus cannabinus) and oak, respectively. The chain is AA9 family lytic polysaccharide monooxygenase B from Gloeophyllum trabeum (strain ATCC 11539 / FP-39264 / Madison 617) (Brown rot fungus).